We begin with the raw amino-acid sequence, 530 residues long: Retinoic acid-induced protein 2 (530 aa).

Polar residues predominate over residues 1–13 (MDDLQSQNLSMDM). The tract at residues 1–22 (MDDLQSQNLSMDMTDSPPALAN) is disordered.

This Homo sapiens (Human) protein is Retinoic acid-induced protein 2 (RAI2).